We begin with the raw amino-acid sequence, 323 residues long: Beta-ketoacyl-[acyl-carrier-protein] synthase III (323 aa).

Residues C113 and H250 contribute to the active site. Residues 251-255 (QANKR) form an ACP-binding region. N280 is a catalytic residue.

The protein belongs to the thiolase-like superfamily. FabH family. Homodimer.

The protein resides in the cytoplasm. It catalyses the reaction malonyl-[ACP] + acetyl-CoA + H(+) = 3-oxobutanoyl-[ACP] + CO2 + CoA. Its pathway is lipid metabolism; fatty acid biosynthesis. In terms of biological role, catalyzes the condensation reaction of fatty acid synthesis by the addition to an acyl acceptor of two carbons from malonyl-ACP. Catalyzes the first condensation reaction which initiates fatty acid synthesis and may therefore play a role in governing the total rate of fatty acid production. Possesses both acetoacetyl-ACP synthase and acetyl transacylase activities. Its substrate specificity determines the biosynthesis of branched-chain and/or straight-chain of fatty acids. The polypeptide is Beta-ketoacyl-[acyl-carrier-protein] synthase III (Chelativorans sp. (strain BNC1)).